The following is a 326-amino-acid chain: MTNSSMFCPIYRDLEPFTYFFYLVYLIGIIGSCFATWAFIQKSTNHRCVSIYLINLLTADFLLTLALPVKIVVDLGVAPWKLRIFHCQVTACLIYINMYLSIIFLAFVSIDRCLQLVHSCKIYRIQEPGFAKMISAVVWLMVLLIMVPNMVIPIKNIKEKSNVGCMEFKREFGKNWHLLTNFICVAIFLNFSAIILISNFLVIRQLYRNRDNANYPSVKSALLNILLVTASYIICFVPYHAVRIPYTLSQTEVISDCSTRIALFKAKEATLLLAVSNLCFDPILYYHLSKAFRLKVTETFASPQKMKAREEKPRRENDVQSTGSAC.

Topologically, residues 1 to 19 (MTNSSMFCPIYRDLEPFTY) are extracellular. The helical transmembrane segment at 20-40 (FFYLVYLIGIIGSCFATWAFI) threads the bilayer. Residues 41 to 48 (QKSTNHRC) are Cytoplasmic-facing. A helical membrane pass occupies residues 49 to 69 (VSIYLINLLTADFLLTLALPV). Residues 70-89 (KIVVDLGVAPWKLRIFHCQV) lie on the Extracellular side of the membrane. A disulfide bridge links C87 with C165. The helical transmembrane segment at 90–110 (TACLIYINMYLSIIFLAFVSI) threads the bilayer. The Cytoplasmic portion of the chain corresponds to 111–133 (DRCLQLVHSCKIYRIQEPGFAKM). A helical transmembrane segment spans residues 134 to 154 (ISAVVWLMVLLIMVPNMVIPI). Residues 155–182 (KNIKEKSNVGCMEFKREFGKNWHLLTNF) lie on the Extracellular side of the membrane. A helical transmembrane segment spans residues 183-203 (ICVAIFLNFSAIILISNFLVI). The Cytoplasmic segment spans residues 204 to 221 (RQLYRNRDNANYPSVKSA). Residues 222–242 (LLNILLVTASYIICFVPYHAV) form a helical membrane-spanning segment. The Extracellular segment spans residues 243–268 (RIPYTLSQTEVISDCSTRIALFKAKE). A helical transmembrane segment spans residues 269-289 (ATLLLAVSNLCFDPILYYHLS). At 290–326 (KAFRLKVTETFASPQKMKAREEKPRRENDVQSTGSAC) the chain is on the cytoplasmic side. A disordered region spans residues 305–326 (KMKAREEKPRRENDVQSTGSAC). Basic and acidic residues predominate over residues 307–318 (KAREEKPRREND).

The protein belongs to the G-protein coupled receptor 1 family.

The protein localises to the cell membrane. G-protein coupled receptor for Big LEN, a 16-amino acid neuropeptide produced from the precursor protein, proSAAS (encoded by PCSK1N). Acts through a G(i)-alpha-mediated pathway in response to Big LEN. Big LEN-GPR171 system plays an important role in regulating feeding and metabolism. Also plays a role in modulating fear and anxiety-like behaviors in the basolateral amygdala. Big LEN-GPR171 modulates the mu-type opioid receptor signaling and antinociception. Acts as a negative regulator T cell function. The polypeptide is G-protein coupled receptor 171 (Rattus norvegicus (Rat)).